Consider the following 314-residue polypeptide: Probable cell division protein WhiA (314 aa).

Positions serine 282–glutamate 314 form a DNA-binding region, H-T-H motif.

It belongs to the WhiA family.

Functionally, involved in cell division and chromosome segregation. This chain is Probable cell division protein WhiA, found in Symbiobacterium thermophilum (strain DSM 24528 / JCM 14929 / IAM 14863 / T).